The sequence spans 155 residues: MDRPRTLRTYRGLIRAILKYERPSKIVNWGNLRKAMITKLEYAKKQNQRDSHENINRQLEKWKKLDPVSDRSLNLFIADSKSLRSILQNDIKWEKKVAQGQNVDEIFEHALDIIKFLDNQREYEELVDRYNPGNKLTQDEKVKRTANVVGLDVPT.

The protein belongs to the FMC1 family.

It is found in the mitochondrion. Needed for the assembly of the mitochondrial F1-F0 complex at high temperature. The polypeptide is ATP synthase assembly factor FMC1, mitochondrial (FMC1) (Saccharomyces cerevisiae (strain ATCC 204508 / S288c) (Baker's yeast)).